Here is a 409-residue protein sequence, read N- to C-terminus: Protein naked cuticle homolog 2-like (409 aa).

A lipid anchor (N-myristoyl glycine) is attached at Gly-2. One can recognise an EF-hand domain in the interval 109–144 (AEDNRQEWVFTLYDFDNSGKVTKEDMSSLMHTIYDV). Ca(2+) is bound by residues Asp-122, Asp-124, Ser-126, Lys-128, and Asp-133. 4 disordered regions span residues 166 to 224 (VTPE…YCVD), 243 to 315 (TSRF…RFPG), 346 to 367 (NHTHAHTPSGLQHSHSRRIRSR), and 388 to 409 (RHEHHHHHEHHHHHHYHHYHQT). Composition is skewed to basic and acidic residues over residues 171–185 (AARRRDATHTERETS) and 193–224 (VRSEEHRSADRRQSTHIRGQTEAHEGNHYCVD). Residues 247–268 (DSSSPDADQDPPSRSSHSQSRP) are compositionally biased toward low complexity. Basic residues predominate over residues 389-409 (HEHHHHHEHHHHHHYHHYHQT).

It belongs to the NKD family.

Its subcellular location is the cell membrane. The protein localises to the cytoplasm. Its function is as follows. Cell autonomous antagonist of both the canonical and non-canonical Wnt signaling pathways. The chain is Protein naked cuticle homolog 2-like (nkd2l) from Danio rerio (Zebrafish).